The sequence spans 91 residues: MNDQNERRLETLSGQVSSLKNVTYDIYSRANDYTRIDRATESFSGLSNSVKKSTENFFRVVRSAGRRRIMTMVLAIVGSILIIYYASKWFF.

Residues 1–68 lie on the Cytoplasmic side of the membrane; that stretch reads MNDQNERRLE…RVVRSAGRRR (68 aa). A helical; Anchor for type IV membrane protein transmembrane segment spans residues 69–86; it reads IMTMVLAIVGSILIIYYA. The Lumenal portion of the chain corresponds to 87 to 91; that stretch reads SKWFF.

As to quaternary structure, component of a SNARE complex consisting of sed5, gos1, ykt6 and sft1.

The protein resides in the golgi apparatus membrane. Vesicle SNARE required for retrograde transport within the Golgi complex. This chain is Protein transport protein sft1 (sft1), found in Schizosaccharomyces pombe (strain 972 / ATCC 24843) (Fission yeast).